We begin with the raw amino-acid sequence, 833 residues long: Major vault protein (833 aa).

MVP repeat units lie at residues 10-52 (RYYY…VSVP), 54-115 (RHYC…RKLQ), 119-170 (PNTG…TVIY), 171-223 (PNTA…TMLS), 224-278 (ELKA…VSLN), 280-328 (KEYV…LVVG), 329-380 (KEEA…MALD), and 381-433 (RNEG…SIKT).

In terms of assembly, the vault ribonucleoprotein particle is a huge (400 A x 670 A) cage structure of 12.9 MDa. It consists of a dimer of half-vaults, with each half-vault comprising 39 identical major vault protein (MVP) chains, PARP4 and one or more vault RNAs (vRNAs).

Its subcellular location is the cytoplasm. It is found in the nucleus. Required for normal vault structure. Vaults are multi-subunit structures that may act as scaffolds for proteins involved in signal transduction. Vaults may also play a role in nucleo-cytoplasmic transport. The sequence is that of Major vault protein from Leishmania braziliensis.